A 183-amino-acid chain; its full sequence is Holliday junction branch migration complex subunit RuvA (183 aa).

Positions 1-64 (MVVGIEGIIT…EDSNKFYGFL (64 aa)) are domain I. The segment at 65–139 (DKDEQKMFEM…DTKTKLENVS (75 aa)) is domain II. Serine 139 is a region of interest (flexible linker). The domain III stretch occupies residues 139–183 (SDDKSEALAALLTLGFKQEKIISVLASAQATGTSELIKEALKKLG).

This sequence belongs to the RuvA family. As to quaternary structure, homotetramer. Forms an RuvA(8)-RuvB(12)-Holliday junction (HJ) complex. HJ DNA is sandwiched between 2 RuvA tetramers; dsDNA enters through RuvA and exits via RuvB. An RuvB hexamer assembles on each DNA strand where it exits the tetramer. Each RuvB hexamer is contacted by two RuvA subunits (via domain III) on 2 adjacent RuvB subunits; this complex drives branch migration. In the full resolvosome a probable DNA-RuvA(4)-RuvB(12)-RuvC(2) complex forms which resolves the HJ.

The protein resides in the cytoplasm. The RuvA-RuvB-RuvC complex processes Holliday junction (HJ) DNA during genetic recombination and DNA repair, while the RuvA-RuvB complex plays an important role in the rescue of blocked DNA replication forks via replication fork reversal (RFR). RuvA specifically binds to HJ cruciform DNA, conferring on it an open structure. The RuvB hexamer acts as an ATP-dependent pump, pulling dsDNA into and through the RuvAB complex. HJ branch migration allows RuvC to scan DNA until it finds its consensus sequence, where it cleaves and resolves the cruciform DNA. In Campylobacter jejuni subsp. jejuni serotype O:23/36 (strain 81-176), this protein is Holliday junction branch migration complex subunit RuvA.